A 486-amino-acid chain; its full sequence is uncharacterized protein (486 aa).

An N-terminal signal peptide occupies residues 1-25; it reads MGTMRSVYLIIIIILFFAFISLSFG. 2 stretches are compositionally biased toward basic and acidic residues: residues 306 to 316 and 326 to 349; these read KKEEKENEESS and KKEE…KQEK. Positions 306–349 are disordered; sequence KKEEKENEESSKTINQMQRHKKEEKSQTQETKKPSKNEMNKQEK.

This is an uncharacterized protein from Methanocaldococcus jannaschii (strain ATCC 43067 / DSM 2661 / JAL-1 / JCM 10045 / NBRC 100440) (Methanococcus jannaschii).